A 321-amino-acid polypeptide reads, in one-letter code: Lipoyl synthase (321 aa).

Residues Cys-68, Cys-73, Cys-79, Cys-94, Cys-98, Cys-101, and Ser-308 each coordinate [4Fe-4S] cluster. A Radical SAM core domain is found at 80–297 (FNHGTATFMI…KAEALAMGFT (218 aa)).

Belongs to the radical SAM superfamily. Lipoyl synthase family. [4Fe-4S] cluster is required as a cofactor.

It localises to the cytoplasm. It carries out the reaction [[Fe-S] cluster scaffold protein carrying a second [4Fe-4S](2+) cluster] + N(6)-octanoyl-L-lysyl-[protein] + 2 oxidized [2Fe-2S]-[ferredoxin] + 2 S-adenosyl-L-methionine + 4 H(+) = [[Fe-S] cluster scaffold protein] + N(6)-[(R)-dihydrolipoyl]-L-lysyl-[protein] + 4 Fe(3+) + 2 hydrogen sulfide + 2 5'-deoxyadenosine + 2 L-methionine + 2 reduced [2Fe-2S]-[ferredoxin]. It participates in protein modification; protein lipoylation via endogenous pathway; protein N(6)-(lipoyl)lysine from octanoyl-[acyl-carrier-protein]: step 2/2. Functionally, catalyzes the radical-mediated insertion of two sulfur atoms into the C-6 and C-8 positions of the octanoyl moiety bound to the lipoyl domains of lipoate-dependent enzymes, thereby converting the octanoylated domains into lipoylated derivatives. This chain is Lipoyl synthase, found in Salmonella paratyphi A (strain AKU_12601).